The primary structure comprises 393 residues: Yellow-related salivary protein SP03B (393 aa).

An N-terminal signal peptide occupies residues methionine 1 to glycine 18. Asparagine 29 carries N-linked (GlcNAc...) asparagine glycosylation.

Belongs to the major royal jelly protein family. As to expression, female salivary gland (at protein level).

It localises to the secreted. Its function is as follows. Probably modulates blood feeding of sand flies on vertebrate species by binding and sequestering different mediators involved in the host response. Binds biogenic amines. Binds serotonin with high affinity. Poorly binds histamine. Does not bind dopamine, noradrenaline, adrenaline and octopamine. This chain is Yellow-related salivary protein SP03B, found in Phlebotomus perniciosus (Phlebotomine sand fly).